Here is a 362-residue protein sequence, read N- to C-terminus: 3-dehydroquinate synthase (362 aa).

Residues 71–76 (DGEQYK), 105–109 (GVIGD), 129–130 (TT), Lys-142, Lys-151, and 169–172 (CLKT) each bind NAD(+). Zn(2+) is bound by residues Glu-184, His-247, and His-264.

This sequence belongs to the sugar phosphate cyclases superfamily. Dehydroquinate synthase family. Requires Co(2+) as cofactor. Zn(2+) is required as a cofactor. NAD(+) serves as cofactor.

The protein resides in the cytoplasm. The catalysed reaction is 7-phospho-2-dehydro-3-deoxy-D-arabino-heptonate = 3-dehydroquinate + phosphate. The protein operates within metabolic intermediate biosynthesis; chorismate biosynthesis; chorismate from D-erythrose 4-phosphate and phosphoenolpyruvate: step 2/7. In terms of biological role, catalyzes the conversion of 3-deoxy-D-arabino-heptulosonate 7-phosphate (DAHP) to dehydroquinate (DHQ). This chain is 3-dehydroquinate synthase, found in Salmonella agona (strain SL483).